Here is a 250-residue protein sequence, read N- to C-terminus: Glycerol uptake facilitator protein-like 5 (250 aa).

Transmembrane regions (helical) follow at residues 12 to 32 and 46 to 66; these read EFFG…NAFL and GGWL…AMMF. The NPA 1 motif lies at 75–77; sequence NPA. The next 3 membrane-spanning stretches (helical) occupy residues 85–105, 142–162, and 172–192; these read IGIF…LGAI, LNGF…AMGL, and IDIA…SLGG. An NPA 2 motif is present at residues 199 to 201; sequence NPA. The helical transmembrane segment at 230–250 threads the bilayer; that stretch reads VVAPIVGAVIGIWIYKIFFGL.

The protein belongs to the MIP/aquaporin (TC 1.A.8) family.

The protein localises to the cell membrane. Its function is as follows. Probable transporter that facilitates the transmembrane diffusion of an unknown substrate. Is not permeable to water, dihydroxyacetone, glycerol, urea, H(2)O(2) and D/L-lactic acid. This Lactiplantibacillus plantarum (strain ATCC BAA-793 / NCIMB 8826 / WCFS1) (Lactobacillus plantarum) protein is Glycerol uptake facilitator protein-like 5.